Here is a 3491-residue protein sequence, read N- to C-terminus: Erythronolide synthase EryA1 (3491 aa).

The interval 1 to 484 (MSGPRSRTTS…TPRALAEALA (484 aa)) is loading domain. Residues 57 to 372 (VFVFPGQGAQ…AAQAFTGGVA (316 aa)) are acyltransferase 1. Serine 145 acts as the Acyl-ester intermediate; for acyltransferase 1 activity in catalysis. The interval 386 to 410 (PALCRSSRRPRRKTSRPSPASTGTR) is disordered. Basic residues predominate over residues 391–400 (SSRRPRRKTS). Positions 412–487 (RTCCERLLAV…ALAEALAAGT (76 aa)) constitute a Carrier 1 domain. Serine 447 carries the post-translational modification O-(pantetheine 4'-phosphoryl)serine. The Ketosynthase family 3 (KS3) 1 domain occupies 504–928 (GEPVAVVAMA…GTNAHAIIEE (425 aa)). Module regions lie at residues 507–1958 (VAVV…AHLA) and 1982–3404 (IAIV…GFLD). The Acyl-thioester intermediate; for beta-ketoacyl synthase 1 activity role is filled by cysteine 677. Active-site for beta-ketoacyl synthase 1 activity residues include histidine 812 and histidine 850. Residues 1031 to 1352 (VFVFPGQGWQ…ALSRAFAAGV (322 aa)) form an acyltransferase 2 region. Serine 1128 functions as the Acyl-ester intermediate; for acyltransferase 2 activity in the catalytic mechanism. The segment at 1613 to 1790 (GTVLVTGGTG…ATAVAWGTWA (178 aa)) is beta-ketoacyl reductase 1. Residues 1621-1624 (TGGV), 1644-1647 (SRSG), 1673-1674 (DV), lysine 1723, and 1745-1746 (FS) contribute to the NADP(+) site. Residue tyrosine 1760 is the For beta-ketoacyl reductase 1 activity of the active site. One can recognise a Carrier 2 domain in the interval 1886–1961 (EALFELVRSH…TLAAHLAAEL (76 aa)). An O-(pantetheine 4'-phosphoryl)serine modification is found at serine 1921. Residues 1979 to 2402 (DEPIAIVGMA…GTNAHVIIAE (424 aa)) form the Ketosynthase family 3 (KS3) 2 domain. Cysteine 2148 serves as the catalytic Acyl-thioester intermediate; for beta-ketoacyl synthase 2 activity. Catalysis depends on for beta-ketoacyl synthase 2 activity residues histidine 2283 and histidine 2323. Residues 2508–2827 (VFVFPGQGAQ…LADAHTRGVA (320 aa)) form an acyltransferase 3 region. Residue serine 2598 is the Acyl-ester intermediate; for acyltransferase 3 activity of the active site. The beta-ketoacyl reductase 2 stretch occupies residues 3057-3233 (GTILVTGGTA…ATSVAWGLWA (177 aa)). NADP(+) contacts are provided by residues 3065 to 3068 (TAGL), 3088 to 3091 (SRRG), 3117 to 3118 (DV), lysine 3168, and 3188 to 3189 (FS). Residue tyrosine 3203 is the For beta-ketoacyl reductase 2 activity of the active site. The region spanning 3329-3407 (ERTAELVRLV…AVAGFLDAEL (79 aa)) is the Carrier 3 domain. Serine 3367 carries the post-translational modification O-(pantetheine 4'-phosphoryl)serine. Positions 3456–3491 (QAADASGTGANPSGDDLGEAGVDELLEALGRELDGD) are disordered. Residues 3471–3481 (DLGEAGVDELL) are compositionally biased toward acidic residues.

Homodimer. Erythronolide synthase is composed of EryAI, EryAII and EryAIII multimodular (2 modules) polypeptides each coding for a functional synthase subunit which participates in 2 of the six FAS-like elongation steps required for formation of the polyketide. Module 1, 2, 3, 4, 5, and 6 participating in biosynthesis steps 1, 2, 3, 4, 5, and 6, respectively. Pantetheine 4'-phosphate is required as a cofactor.

The catalysed reaction is 6 (S)-methylmalonyl-CoA + propanoyl-CoA + 6 NADPH + 12 H(+) = 6-deoxyerythronolide B + 6 CO2 + 6 NADP(+) + 7 CoA + H2O. It participates in antibiotic biosynthesis; erythromycin biosynthesis. Involved in the biosynthesis of antibiotic erythromycin via the biosynthesis of its aglycone precursor, 6-deoxyerythronolide B (6-dEB). This chain is Erythronolide synthase EryA1 (eryA), found in Saccharopolyspora erythraea (Streptomyces erythraeus).